The sequence spans 378 residues: tRNA-specific 2-thiouridylase MnmA (378 aa).

Residues 14-21 (AMSGGVDS) and Leu-40 contribute to the ATP site. Cys-109 (nucleophile) is an active-site residue. Cys-109 and Cys-208 are oxidised to a cystine. Gly-133 is a binding site for ATP. The segment at 156–158 (KDQ) is interaction with tRNA. Residue Cys-208 is the Cysteine persulfide intermediate of the active site.

This sequence belongs to the MnmA/TRMU family.

The protein localises to the cytoplasm. It catalyses the reaction S-sulfanyl-L-cysteinyl-[protein] + uridine(34) in tRNA + AH2 + ATP = 2-thiouridine(34) in tRNA + L-cysteinyl-[protein] + A + AMP + diphosphate + H(+). Functionally, catalyzes the 2-thiolation of uridine at the wobble position (U34) of tRNA, leading to the formation of s(2)U34. The chain is tRNA-specific 2-thiouridylase MnmA from Streptomyces griseus subsp. griseus (strain JCM 4626 / CBS 651.72 / NBRC 13350 / KCC S-0626 / ISP 5235).